The following is a 931-amino-acid chain: Histone-lysine N-methyltransferase EZ1 (931 aa).

Residues 1–30 (MEAEAAAAVVASSASASASAGRSRPSSSAA) show a composition bias toward low complexity. Disordered regions lie at residues 1–37 (MEAE…SNSA), 372–450 (PTHS…ITNR), and 491–549 (RNGN…YDSS). Residues 375–385 (SSDNVMNQPGS) are compositionally biased toward polar residues. Over residues 386-398 (NRKKNGSSGRKTK) the composition is skewed to basic residues. Over residues 423 to 433 (SNKSPQHSPSP) the composition is skewed to polar residues. Positions 500-509 (SSQQSSPSTR) are enriched in low complexity. Residues 528–549 (AHNDSTEEANNRHSATDGYDSS) are compositionally biased toward basic and acidic residues. The SANT domain maps to 565-615 (YLRSWKAIEQGLLVKGLEIFGRNSCLIARNLLGGMKTCKDVFQYMNYIENN). One can recognise a CXC domain in the interval 664–763 (FKRITERKDQ…TLGVPNQRGD (100 aa)). One can recognise an SET domain in the interval 778 to 893 (QRVLLGRSDV…AGEELFYDYR (116 aa)). The segment covering 903-915 (ARKPEASGAKDDG) has biased composition (basic and acidic residues). Positions 903 to 931 (ARKPEASGAKDDGQPFNGRAKKLAQNNRG) are disordered.

This sequence belongs to the class V-like SAM-binding methyltransferase superfamily. Histone-lysine methyltransferase family. EZ subfamily. As to expression, widely expressed.

Its subcellular location is the nucleus. It catalyses the reaction L-lysyl(27)-[histone H3] + 3 S-adenosyl-L-methionine = N(6),N(6),N(6)-trimethyl-L-lysyl(27)-[histone H3] + 3 S-adenosyl-L-homocysteine + 3 H(+). Functionally, polycomb group (PcG) protein. Catalytic subunit of some PcG multiprotein complex, which methylates 'Lys-27' of histone H3, leading to transcriptional repression of the affected target genes. PcG proteins are not required to initiate repression, but to maintain it during later stages of development. The chain is Histone-lysine N-methyltransferase EZ1 (EZ1) from Zea mays (Maize).